The primary structure comprises 564 residues: MAPKDIMTNSHAKSILNAMNALRKSNTLCDITLRVEGTDFPAHRIVLAACSDYFCAMFTSELAEKGKSFVDIQGLTASTMEILLDFVYTETVLVTVENVQELLPAACLLQLKGVKRACCDFLNSQLDPSNCLGIRDFAETHNCLDLMQAAELFSQKHFAEVVQQEEFMLLSQSEVEKLIKCDEIQVDSEEPVFEAVLNWVKHNRKEREPYLPDLLEYVRMPLLTPRYITDVIDAEPLIRCSLPCRDLVDEAKKFHLRPELRSEMQSPRTQARLGAKEVLLVIGGFGSQQSPIDIVEKYDPKTREWSFLPNIARKRRYVATVALNDRVYVIGGYDGRSRLSSVECLDYTADEDGVWYSVATMNVRRGLAGATTLGDMIYVAGGFDGSRRHTSMERYDPNIDQWSMLGDMQTAREGAGLVVASGLIYCLGGYDGLNILNSVERYDPHTGHWTSVTPMANKRSGAGVALLNDHIYVVGGFDGTAHLSSVEVYNIRTDYWTTVANMTTPRCYVGATVLRGRLYAIAGYDGNSLLSSIECYDPVIDSWEVVTSMATQRCDAGVCVLREK.

Residues Cys29–Val96 form the BTB domain. Positions Cys131–Ile232 constitute a BACK domain. 6 Kelch repeats span residues Val278 to Asp325, Val327 to Asp375, Met376 to Gly422, Leu423 to Asp469, Ile471 to Gly516, and Leu518 to Glu563.

As to quaternary structure, component of the BCR(KLHL12) E3 ubiquitin ligase complex.

It localises to the cytoplasmic vesicle. It is found in the COPII-coated vesicle. It participates in protein modification; protein ubiquitination. Substrate-specific adapter of a BCR (BTB-CUL3-RBX1) E3 ubiquitin ligase complex that acts as a negative regulator of Wnt signaling pathway and ER-Golgi transport. The BCR(KLHL12) complex is involved in ER-Golgi transport by regulating the size of COPII coats, thereby playing a key role in collagen export, which is required for embryonic stem (ES) cells division. Negatively regulates the Wnt signaling pathway, possibly via the targeted ubiquitination and subsequent proteolysis of dvl2 and dvl3. Regulates convergent-extension movements during early embryonic development. This is Kelch-like protein 12 (klhl12) from Danio rerio (Zebrafish).